The chain runs to 85 residues: Large ribosomal subunit protein bL27 (85 aa).

Residues 1–22 are disordered; sequence MAHKKAGGSTNNGRDSESKRLG.

The protein belongs to the bacterial ribosomal protein bL27 family.

The protein is Large ribosomal subunit protein bL27 of Psychromonas ingrahamii (strain DSM 17664 / CCUG 51855 / 37).